The following is a 185-amino-acid chain: A-type ATP synthase subunit E (185 aa).

The protein belongs to the V-ATPase E subunit family. Has multiple subunits with at least A(3), B(3), C, D, E, F, H, I and proteolipid K(x).

Its subcellular location is the cell membrane. Its function is as follows. Component of the A-type ATP synthase that produces ATP from ADP in the presence of a proton gradient across the membrane. This chain is A-type ATP synthase subunit E, found in Thermoplasma acidophilum (strain ATCC 25905 / DSM 1728 / JCM 9062 / NBRC 15155 / AMRC-C165).